The following is a 331-amino-acid chain: Beta-ketoacyl-[acyl-carrier-protein] synthase III (331 aa).

Residues Cys-116 and His-256 contribute to the active site. The tract at residues 257 to 261 is ACP-binding; that stretch reads QANTR. Residue Asn-286 is part of the active site.

It belongs to the thiolase-like superfamily. FabH family. As to quaternary structure, homodimer.

It localises to the cytoplasm. It carries out the reaction malonyl-[ACP] + acetyl-CoA + H(+) = 3-oxobutanoyl-[ACP] + CO2 + CoA. It participates in lipid metabolism; fatty acid biosynthesis. Its function is as follows. Catalyzes the condensation reaction of fatty acid synthesis by the addition to an acyl acceptor of two carbons from malonyl-ACP. Catalyzes the first condensation reaction which initiates fatty acid synthesis and may therefore play a role in governing the total rate of fatty acid production. Possesses both acetoacetyl-ACP synthase and acetyl transacylase activities. Its substrate specificity determines the biosynthesis of branched-chain and/or straight-chain of fatty acids. This is Beta-ketoacyl-[acyl-carrier-protein] synthase III from Caldanaerobacter subterraneus subsp. tengcongensis (strain DSM 15242 / JCM 11007 / NBRC 100824 / MB4) (Thermoanaerobacter tengcongensis).